Consider the following 648-residue polypeptide: Probable potassium transport system protein Kup 1 (648 aa).

Residues M1–H31 form a disordered region. A compositionally biased stretch (low complexity) spans G10 to Q26. Transmembrane regions (helical) follow at residues L39–L59, L73–F93, I130–A150, P165–I185, V193–A213, F243–M263, W275–I295, L317–F337, I364–F384, Y394–F414, A421–A441, and I446–T466.

It belongs to the HAK/KUP transporter (TC 2.A.72) family.

It localises to the cell inner membrane. The enzyme catalyses K(+)(in) + H(+)(in) = K(+)(out) + H(+)(out). Transport of potassium into the cell. Likely operates as a K(+):H(+) symporter. This chain is Probable potassium transport system protein Kup 1, found in Novosphingobium aromaticivorans (strain ATCC 700278 / DSM 12444 / CCUG 56034 / CIP 105152 / NBRC 16084 / F199).